Reading from the N-terminus, the 251-residue chain is CDP-diacylglycerol pyrophosphatase (251 aa).

A helical membrane pass occupies residues 4–24 (AGLLFLVMIVIAVVAAGIGYW).

Belongs to the Cdh family.

The protein localises to the cell inner membrane. It carries out the reaction a CDP-1,2-diacyl-sn-glycerol + H2O = a 1,2-diacyl-sn-glycero-3-phosphate + CMP + 2 H(+). Its pathway is phospholipid metabolism; CDP-diacylglycerol degradation; phosphatidate from CDP-diacylglycerol: step 1/1. The polypeptide is CDP-diacylglycerol pyrophosphatase (Shigella flexneri).